We begin with the raw amino-acid sequence, 87 residues long: Large ribosomal subunit protein bL31B (87 aa).

The protein belongs to the bacterial ribosomal protein bL31 family. Type B subfamily. As to quaternary structure, part of the 50S ribosomal subunit.

The chain is Large ribosomal subunit protein bL31B from Burkholderia multivorans (strain ATCC 17616 / 249).